The following is a 363-amino-acid chain: NAD(P)H-quinone oxidoreductase subunit 1, chloroplastic (363 aa).

The next 6 membrane-spanning stretches (helical) occupy residues valine 27–isoleucine 47, isoleucine 104–leucine 124, leucine 127–methionine 147, tyrosine 248–serine 268, valine 300–isoleucine 320, and phenylalanine 343–leucine 363.

It belongs to the complex I subunit 1 family. In terms of assembly, NDH is composed of at least 16 different subunits, 5 of which are encoded in the nucleus.

It is found in the plastid. The protein localises to the chloroplast thylakoid membrane. It catalyses the reaction a plastoquinone + NADH + (n+1) H(+)(in) = a plastoquinol + NAD(+) + n H(+)(out). The catalysed reaction is a plastoquinone + NADPH + (n+1) H(+)(in) = a plastoquinol + NADP(+) + n H(+)(out). Functionally, NDH shuttles electrons from NAD(P)H:plastoquinone, via FMN and iron-sulfur (Fe-S) centers, to quinones in the photosynthetic chain and possibly in a chloroplast respiratory chain. The immediate electron acceptor for the enzyme in this species is believed to be plastoquinone. Couples the redox reaction to proton translocation, and thus conserves the redox energy in a proton gradient. In Ranunculus macranthus (Large buttercup), this protein is NAD(P)H-quinone oxidoreductase subunit 1, chloroplastic.